The primary structure comprises 953 residues: Xylosyltransferase 1 (953 aa).

Over 1 to 17 (MVAAPCARRLARRSHSA) the chain is Cytoplasmic. Residues 18 to 38 (LLAALMVLLLHTLVVWNFSSL) traverse the membrane as a helical; Signal-anchor for type II membrane protein segment. At 39–953 (DSGAGEQRRA…GAVKPDGRLR (915 aa)) the chain is on the lumenal side. Over residues 48–62 (AGAAAGAAEQQQPAA) the composition is skewed to low complexity. Disordered regions lie at residues 48–67 (AGAA…RRER) and 74–251 (LPAA…APKC). Residues 79 to 97 (GGPGGRAGGGGARGGGPGG) show a composition bias toward gly residues. A compositionally biased stretch (basic and acidic residues) spans 138–154 (KVRTDSNNENSVPKDFE). The segment covering 156-165 (VDNSNFAPRT) has biased composition (polar residues). Composition is skewed to basic and acidic residues over residues 170 to 197 (HQPE…DKRQ) and 205 to 216 (GPKEVLPPREKA). N-linked (GlcNAc...) asparagine glycosylation is present at Asn-219. 4 disulfide bridges follow: Cys-251/Cys-279, Cys-295/Cys-536, Cys-555/Cys-568, and Cys-557/Cys-566. UDP-alpha-D-xylose contacts are provided by residues Val-327, Asp-355, and 384–386 (TIW). Asn-415 carries an N-linked (GlcNAc...) asparagine glycan. 488 to 489 (DW) is a UDP-alpha-D-xylose binding site. Residues Ser-569 and 592–593 (RK) each bind UDP-alpha-D-xylose. Disulfide bonds link Cys-669/Cys-921 and Cys-914/Cys-927. Residue Asn-771 is glycosylated (N-linked (GlcNAc...) asparagine). Residues 933–953 (SSFSPDPKSELGAVKPDGRLR) form a disordered region.

The protein belongs to the glycosyltransferase 14 family. XylT subfamily. As to quaternary structure, monomer. It depends on a divalent metal cation as a cofactor. In terms of processing, contains 7 disulfide bonds. N-glycosylated. As to expression, detected in brain, spleen, kidney and testis, and at low levels in skeletal muscle.

The protein localises to the golgi apparatus membrane. It carries out the reaction UDP-alpha-D-xylose + L-seryl-[protein] = 3-O-(beta-D-xylosyl)-L-seryl-[protein] + UDP + H(+). The protein operates within glycan metabolism; chondroitin sulfate biosynthesis. It participates in glycan metabolism; heparan sulfate biosynthesis. In terms of biological role, catalyzes the first step in the biosynthesis of chondroitin sulfate and dermatan sulfate proteoglycans, such as DCN. Transfers D-xylose from UDP-D-xylose to specific serine residues of the core protein. Required for normal maturation of chondrocytes during bone development, normal onset of ossification and normal embryonic and postnatal skeleton development, especially of the long bones. The protein is Xylosyltransferase 1 (Xylt1) of Mus musculus (Mouse).